The sequence spans 511 residues: Dihydrolipoyl dehydrogenase, mitochondrial (511 aa).

FAD contacts are provided by residues 75–84, Lys-93, Gly-157, and 187–189; these read EKRGTLGGTC and TGS. A disulfide bond links Cys-84 and Cys-89. NAD(+)-binding positions include 224–231, Glu-247, Leu-281, and Gly-316; that span reads GGGIIGLE. Residues Asp-357 and 363–366 each bind FAD; that span reads MLAH. His-489 (proton acceptor) is an active-site residue.

Belongs to the class-I pyridine nucleotide-disulfide oxidoreductase family. As to quaternary structure, homodimer. It depends on FAD as a cofactor.

It localises to the mitochondrion matrix. It catalyses the reaction N(6)-[(R)-dihydrolipoyl]-L-lysyl-[protein] + NAD(+) = N(6)-[(R)-lipoyl]-L-lysyl-[protein] + NADH + H(+). Functionally, lipoamide dehydrogenase is a component of the alpha-ketoacid dehydrogenase complexes. Malfunction of this protein blocks the progression of cell cycle from G1 to S phase. The chain is Dihydrolipoyl dehydrogenase, mitochondrial (dld1) from Schizosaccharomyces pombe (strain 972 / ATCC 24843) (Fission yeast).